A 103-amino-acid polypeptide reads, in one-letter code: Small ribosomal subunit protein uS10 (103 aa).

The protein belongs to the universal ribosomal protein uS10 family. In terms of assembly, part of the 30S ribosomal subunit.

Functionally, involved in the binding of tRNA to the ribosomes. This is Small ribosomal subunit protein uS10 from Hahella chejuensis (strain KCTC 2396).